The following is a 237-amino-acid chain: 1-(5-phosphoribosyl)-5-[(5-phosphoribosylamino)methylideneamino] imidazole-4-carboxamide isomerase (237 aa).

The active-site Proton acceptor is Asp8. The active-site Proton donor is the Asp129.

Belongs to the HisA/HisF family.

The protein localises to the cytoplasm. It carries out the reaction 1-(5-phospho-beta-D-ribosyl)-5-[(5-phospho-beta-D-ribosylamino)methylideneamino]imidazole-4-carboxamide = 5-[(5-phospho-1-deoxy-D-ribulos-1-ylimino)methylamino]-1-(5-phospho-beta-D-ribosyl)imidazole-4-carboxamide. The protein operates within amino-acid biosynthesis; L-histidine biosynthesis; L-histidine from 5-phospho-alpha-D-ribose 1-diphosphate: step 4/9. This Clostridium botulinum (strain Alaska E43 / Type E3) protein is 1-(5-phosphoribosyl)-5-[(5-phosphoribosylamino)methylideneamino] imidazole-4-carboxamide isomerase.